The following is a 1320-amino-acid chain: MAASRRSQHHHHHHQQQLQPAPGASAPPPPPPPPLSPGLAPGPTPASPTAGGLAPFASPRHGLALPEGDGSRDPPDRPRSPDPVDGAVCTVAAPAAVPAASAAVGVAPTPAGGGGGGGNNSASSASSPTSSSSSSPSSPGSSLAESPEAAGVGSTATLGAGAAGLGPGVPAVSGALRELLEACRNGDVSRVKRLVDAANVNAKDMAGRKSSPLHFAAGFGRKDVVEHLLQMGANVHARDDGGLIPLHNACSFGHAEVVSLLLCQGADPNARDNWNYTPLHEAAIKGKIDVCIVLLQHGADPNIRNTDGKSALDLADPSAKAVLTGEYKKDELLEAARSGNEEKLMALLTPLNVNCHASDGRKSTPLHLAAGYNRVRIVQLLLQHGADVHAKDKGGLVPLHNACSYGHYEVTELLLKHGACVNAMDLWQFTPLHEAASKNRVEVCSLLLSHGADPTLVNCHGKSAVDMAPTPELRERLTYEFKGHSLLQAAREADLAKVKKTLALEIINFKQPQSHETALHCAVASLHPKRKQVAELLLRKGANVNEKNKDFMTPLHVAAERAHNDVMEVLHKHGAKMNALDSLGQTALHRAALAGHLQTCRLLLSYGSDPSIISLQGFTAAQMGNEAVQQILSESTPMRTSDVDYRLLEASKAGDLETVKQLCSPQNVNCRDLEGRHSTPLHFAAGYNRVSVVEYLLHHGADVHAKDKGGLVPLHNACSYGHYEVAELLVRHGASVNVADLWKFTPLHEAAAKGKYEICKLLLKHGADPTKKNRDGNTPLDLVKEGDTDIQDLLRGDAALLDAAKKGCLARVQKLCTPENINCRDTQGRNSTPLHLAAGYNNLEVAEYLLEHGADVNAQDKGGLIPLHNAASYGHVDIAALLIKYNTCVNATDKWAFTPLHEAAQKGRTQLCALLLAHGADPTMKNQEGQTPLDLATADDIRALLIDAMPPEALPTCFKPQATVVSASLISPASTPSCLSAASSIDNLTGPLTDLAVGGASNAGDGAAGAERKEGEVAGLDMNISQFLKSLGLEHLRDIFETEQITLDVLADMGHEELKEIGINAYGHRHKLIKGVERLLGGQQGTNPYLTFHCVNQGTILLDLAPEDKEYQSVEEEMQSTIREHRDGGNAGGIFNRYNVIRIQKVVNKKLRERFCHRQKEVSEENHNHHNERMLFHGSPFINAIIHKGFDERHAYIGGMFGAGIYFAENSSKSNQYVYGIGGGTGCPTHKDRSCYICHRQMLFCRVTLGKSFLQFSTMKMAHAPPGHHSVIGRPSVNGLAYAEYVIYRGEQAYPEYLITYQIMKPEAPSQTATAAEQKT.

Basic residues predominate over residues 1 to 15; the sequence is MAASRRSQHHHHHHQ. Disordered stretches follow at residues 1 to 88 and 111 to 152; these read MAAS…DGAV and AGGG…AAGV. Over residues 25-46 the composition is skewed to pro residues; sequence SAPPPPPPPPLSPGLAPGPTPA. Basic and acidic residues predominate over residues 69–82; sequence DGSRDPPDRPRSPD. Residues 120–152 are compositionally biased toward low complexity; sequence NSASSASSPTSSSSSSPSSPGSSLAESPEAAGV. ANK repeat units lie at residues 174 to 202, 208 to 237, 241 to 270, 274 to 303, 361 to 390, 394 to 423, 427 to 456, 514 to 546, 550 to 579, 583 to 612, 676 to 705, 709 to 738, 742 to 771, 775 to 803, 829 to 858, 862 to 891, 895 to 924, and 928 to 957; these read GALR…NVNA, RKSS…NVHA, GGLI…DPNA, WNYT…DPNI, RKST…DVHA, GGLV…CVNA, WQFT…DPTL, SHET…NVNE, DFMT…KMNA, LGQT…DPSI, RHST…DVHA, GGLV…SVNV, WKFT…DPTK, DGNT…LLDA, RNST…DVNA, GGLI…CVNA, WAFT…DPTM, and EGQT…LPTC. Residues 1019–1082 form the SAM domain; it reads GLDMNISQFL…IKGVERLLGG (64 aa). The region spanning 1105–1310 is the PARP catalytic domain; the sequence is APEDKEYQSV…YQIMKPEAPS (206 aa). Residues cysteine 1227, histidine 1230, cysteine 1235, and cysteine 1238 each contribute to the Zn(2+) site.

Belongs to the ARTD/PARP family. In terms of assembly, oligomerizes and associates with TNKS2. Interacts with the cytoplasmic domain of LNPEP/Otase in SLC2A4/GLUT4-vesicles. Binds to the N-terminus of telomeric TERF1 via the ANK repeats. Found in a complex with POT1; TERF1 and TINF2. Interacts with AXIN1. Interacts with AXIN2. Interacts with BLZF1 and CASC3. Interacts with NUMA1. In terms of processing, phosphorylated on serine residues by MAPK kinases upon insulin stimulation. Phosphorylated during mitosis. Post-translationally, ubiquitinated by RNF146 when auto-poly-ADP-ribosylated, leading to its degradation. ADP-ribosylated (-auto). Poly-ADP-ribosylated protein is recognized by RNF146, followed by ubiquitination.

It localises to the cytoplasm. Its subcellular location is the golgi apparatus membrane. It is found in the cytoskeleton. The protein resides in the microtubule organizing center. The protein localises to the centrosome. It localises to the nucleus. Its subcellular location is the nuclear pore complex. It is found in the chromosome. The protein resides in the telomere. The protein localises to the spindle pole. It catalyses the reaction NAD(+) + (ADP-D-ribosyl)n-acceptor = nicotinamide + (ADP-D-ribosyl)n+1-acceptor + H(+).. It carries out the reaction L-aspartyl-[protein] + NAD(+) = 4-O-(ADP-D-ribosyl)-L-aspartyl-[protein] + nicotinamide. The catalysed reaction is L-glutamyl-[protein] + NAD(+) = 5-O-(ADP-D-ribosyl)-L-glutamyl-[protein] + nicotinamide. Functionally, poly-ADP-ribosyltransferase involved in various processes such as Wnt signaling pathway, telomere length and vesicle trafficking. Acts as an activator of the Wnt signaling pathway by mediating poly-ADP-ribosylation (PARsylation) of AXIN1 and AXIN2, 2 key components of the beta-catenin destruction complex: poly-ADP-ribosylated target proteins are recognized by RNF146, which mediates their ubiquitination and subsequent degradation. Also mediates PARsylation of BLZF1 and CASC3, followed by recruitment of RNF146 and subsequent ubiquitination. Mediates PARsylation of TERF1, thereby contributing to the regulation of telomere length. Involved in centrosome maturation during prometaphase by mediating PARsylation of HEPACAM2/MIKI. May also regulate vesicle trafficking and modulate the subcellular distribution of SLC2A4/GLUT4-vesicles. May be involved in spindle pole assembly through PARsylation of NUMA1. Stimulates 26S proteasome activity. The sequence is that of Poly [ADP-ribose] polymerase tankyrase-1 (Tnks) from Mus musculus (Mouse).